Consider the following 315-residue polypeptide: tRNA uridine(34) hydroxylase (315 aa).

In terms of domain architecture, Rhodanese spans 145–235; the sequence is MKNDFILVDM…GIIEYVNFIK (91 aa). Residue C199 is the Cysteine persulfide intermediate of the active site.

It belongs to the TrhO family.

It catalyses the reaction uridine(34) in tRNA + AH2 + O2 = 5-hydroxyuridine(34) in tRNA + A + H2O. Functionally, catalyzes oxygen-dependent 5-hydroxyuridine (ho5U) modification at position 34 in tRNAs. This is tRNA uridine(34) hydroxylase from Wigglesworthia glossinidia brevipalpis.